Reading from the N-terminus, the 515-residue chain is Glucose-6-phosphate 1-dehydrogenase (515 aa).

A2 carries the N-acetylalanine modification. The residue at position 8 (S8) is a Phosphoserine. Residue T10 is modified to Phosphothreonine. Residues G38–K45 and R72 contribute to the NADP(+) site. K89 carries the N6-acetyllysine modification. 2 residues coordinate NADP(+): Y147 and K171. D-glucose 6-phosphate-binding positions include K171, H201 to K205, E239, and D258. The residue at position 171 (K171) is an N6-(2-hydroxyisobutyryl)lysine; alternate. K171 bears the N6-acetyllysine; alternate mark. H263 functions as the Proton acceptor in the catalytic mechanism. R357 is an NADP(+) binding site. Positions 360 and 365 each coordinate D-glucose 6-phosphate. The NADP(+) site is built by K366, R370, and R393. Position 395 (Q395) interacts with D-glucose 6-phosphate. NADP(+) is bound by residues Y401 to K403 and D421 to T423. An N6-acetyllysine modification is found at K403. K432 carries the N6-acetyllysine modification. Residue R487 participates in NADP(+) binding. K497 carries the N6-acetyllysine modification. NADP(+) is bound by residues Y503 and W509. Residue Y503 is modified to Phosphotyrosine.

This sequence belongs to the glucose-6-phosphate dehydrogenase family. In terms of assembly, homotetramer; dimer of dimers. Interacts with SIRT2; the interaction is enhanced by H(2)O(2) treatment. Forms a ternary complex with ALDOB and TP53; this interaction is direct. ALDOB stabilizes the complex inhibiting G6PD activity and keeping oxidative pentose phosphate metabolism in check. In terms of processing, acetylated by ELP3 at Lys-403; acetylation inhibits its homodimerization and enzyme activity. Deacetylated by SIRT2 at Lys-403; deacetylation stimulates its enzyme activity.

The protein resides in the cytoplasm. The protein localises to the cytosol. It is found in the membrane. The catalysed reaction is D-glucose 6-phosphate + NADP(+) = 6-phospho-D-glucono-1,5-lactone + NADPH + H(+). The protein operates within carbohydrate degradation; pentose phosphate pathway; D-ribulose 5-phosphate from D-glucose 6-phosphate (oxidative stage): step 1/3. Its function is as follows. Cytosolic glucose-6-phosphate dehydrogenase that catalyzes the first and rate-limiting step of the oxidative branch within the pentose phosphate pathway/shunt, an alternative route to glycolysis for the dissimilation of carbohydrates and a major source of reducing power and metabolic intermediates for fatty acid and nucleic acid biosynthetic processes. In Cricetulus griseus (Chinese hamster), this protein is Glucose-6-phosphate 1-dehydrogenase (G6PD).